The following is a 133-amino-acid chain: Small ribosomal subunit protein uS8 (133 aa).

The protein belongs to the universal ribosomal protein uS8 family. In terms of assembly, part of the 30S ribosomal subunit.

Its function is as follows. One of the primary rRNA binding proteins, it binds directly to 16S rRNA central domain where it helps coordinate assembly of the platform of the 30S subunit. The chain is Small ribosomal subunit protein uS8 from Staphylothermus marinus (strain ATCC 43588 / DSM 3639 / JCM 9404 / F1).